Reading from the N-terminus, the 459-residue chain is E3 ubiquitin-protein ligase RNF14 (459 aa).

One can recognise an RWD domain in the interval 10-129 (DELLALASIY…QFLKEETLDF (120 aa)). Residues 141–169 (SGSQPQCEPAQKHAADASGEKSKVQDLDP) are disordered. The segment covering 150-169 (AQKHAADASGEKSKVQDLDP) has biased composition (basic and acidic residues). Positions 200–441 (KAFCCGICYS…NPDSPCYNQL (242 aa)) are TRIAD supradomain. Cysteine 204, cysteine 207, cysteine 222, histidine 224, cysteine 227, cysteine 230, cysteine 249, cysteine 254, cysteine 293, cysteine 298, cysteine 313, cysteine 316, cysteine 321, cysteine 324, histidine 329, cysteine 334, cysteine 388, and cysteine 391 together coordinate Zn(2+). RING-type zinc fingers lie at residues 204-249 (CGIC…CLNC) and 204-254 (CGIC…EPKC). The IBR-type zinc finger occupies 273–334 (ARYDRLLLQS…RRSYHGLSHC (62 aa)). The RING-type 2; atypical zinc-finger motif lies at 388–417 (CPCCGTNIQKAHGCNKMTCSSCQKYFCWIC). Cysteine 401 is an active-site residue. Zn(2+)-binding residues include cysteine 406, cysteine 409, cysteine 414, cysteine 417, histidine 429, and cysteine 437.

It belongs to the RBR family. RNF14 subfamily.

It localises to the cytoplasm. The protein resides in the nucleus. The enzyme catalyses [E2 ubiquitin-conjugating enzyme]-S-ubiquitinyl-L-cysteine + [acceptor protein]-L-lysine = [E2 ubiquitin-conjugating enzyme]-L-cysteine + [acceptor protein]-N(6)-ubiquitinyl-L-lysine.. It participates in protein modification; protein ubiquitination. In terms of biological role, E3 ubiquitin-protein ligase that plays a key role in the RNF14-RNF25 translation quality control pathway, a pathway that takes place when a ribosome has stalled during translation, and which promotes ubiquitination and degradation of translation factors on stalled ribosomes. Recruited to stalled ribosomes by the ribosome collision sensor GCN1 and mediates 'Lys-6'-linked ubiquitination of target proteins, leading to their degradation. Mediates ubiquitination of eef1a1/eEF1A and etf1/eRF1 translation factors on stalled ribosomes, leading to their degradation. Specifically required to resolve RNA-protein cross-links caused by reactive aldehydes, which trigger translation stress by stalling ribosomes: acts by catalying 'Lys-6'-linked ubiquitination of RNA-protein cross-links, leading to their removal by the ATP-dependent unfoldase VCP and subsequent degradation by the proteasome. Independently of its function in the response to stalled ribosomes, acts as a regulator of transcription in Wnt signaling via its interaction with TCF transcription factors (tcf7/tcf1, tcf7l1/tcf3 and tcf7l2/tcf4). In Danio rerio (Zebrafish), this protein is E3 ubiquitin-protein ligase RNF14.